The following is a 396-amino-acid chain: Phosphopentomutase (396 aa).

Aspartate 13, aspartate 288, histidine 293, aspartate 329, histidine 330, and histidine 341 together coordinate Mn(2+).

It belongs to the phosphopentomutase family. Requires Mn(2+) as cofactor.

It is found in the cytoplasm. The catalysed reaction is 2-deoxy-alpha-D-ribose 1-phosphate = 2-deoxy-D-ribose 5-phosphate. It carries out the reaction alpha-D-ribose 1-phosphate = D-ribose 5-phosphate. Its pathway is carbohydrate degradation; 2-deoxy-D-ribose 1-phosphate degradation; D-glyceraldehyde 3-phosphate and acetaldehyde from 2-deoxy-alpha-D-ribose 1-phosphate: step 1/2. In terms of biological role, isomerase that catalyzes the conversion of deoxy-ribose 1-phosphate (dRib-1-P) and ribose 1-phosphate (Rib-1-P) to deoxy-ribose 5-phosphate (dRib-5-P) and ribose 5-phosphate (Rib-5-P), respectively. This Clostridium perfringens (strain SM101 / Type A) protein is Phosphopentomutase.